Here is a 782-residue protein sequence, read N- to C-terminus: General transcription and DNA repair factor IIH helicase/translocase subunit XPB (782 aa).

A compositionally biased stretch (basic and acidic residues) spans 1–11 (MGRKDKSDREK). Disordered regions lie at residues 1–47 (MGRK…VDES) and 211–242 (TISS…SGTQ). The short motif at 6–17 (KSDREKKSKKRY) is the Nuclear localization signal element. The segment covering 19 to 28 (EDEEEDEEVI) has biased composition (acidic residues). The segment covering 211-223 (TISSKSAISKSQQ) has biased composition (low complexity). A compositionally biased stretch (polar residues) spans 224–242 (DNGGPSSSQPADGQRSGTQ). One can recognise a Helicase ATP-binding domain in the interval 326–487 (MFGNGRARSG…DLNFLIGPKL (162 aa)). 339 to 346 (LPCGAGKS) is an ATP binding site. The short motif at 440-443 (DEVH) is the DEVH box element. The Helicase C-terminal domain maps to 541 to 701 (RACQFLIRFH…LAGMEEEDLM (161 aa)).

It belongs to the helicase family. RAD25/XPB subfamily. Component of the 7-subunit TFIIH core complex composed of XPB/ERCC3, XPD/ERCC2, GTF2H1, GTF2H2, GTF2H3, GTF2H4 and GTF2H5, which is active in NER. The core complex associates with the 3-subunit CDK-activating kinase (CAK) module composed of CCNH/cyclin H, CDK7 and MNAT1 to form the 10-subunit holoenzyme (holo-TFIIH) active in transcription. Interacts with PUF60. Interacts with ATF7IP. Interacts with Epstein-Barr virus EBNA2.

The protein resides in the nucleus. It catalyses the reaction Couples ATP hydrolysis with the unwinding of duplex DNA by translocating in the 3'-5' direction.. The catalysed reaction is ATP + H2O = ADP + phosphate + H(+). Functionally, ATP-dependent 3'-5' DNA helicase/translocase; binds dsDNA rather than ssDNA, unzipping it in a translocase rather than classical helicase activity. Component of the general transcription and DNA repair factor IIH (TFIIH) core complex. When complexed to CDK-activating kinase (CAK), involved in RNA transcription by RNA polymerase II. The ATPase activity of XPB/ERCC3, but not its helicase activity, is required for DNA opening; it may wrap around the damaged DNA wedging it open, causing localized melting and twisting that allows XPD/ERCC2 helicase to anchor. The ATP-dependent helicase activity of XPB/ERCC3 may be required for promoter escape. Also involved in transcription-coupled nucleotide excision repair (NER) of damaged DNA. In NER, TFIIH acts by opening DNA around the lesion to allow the excision of the damaged oligonucleotide and its replacement by a new DNA fragment. The protein is General transcription and DNA repair factor IIH helicase/translocase subunit XPB (ercc3) of Danio rerio (Zebrafish).